The following is a 118-amino-acid chain: cAMP-responsive element-binding protein-like 2 (118 aa).

Residues 1–25 form a disordered region; it reads MDDSKVSGGKVKKPGKRGRKPAKID. Basic residues predominate over residues 10–21; the sequence is KVKKPGKRGRKP. Residues 23 to 86 form the bZIP domain; sequence KIDLKAKLER…AAMDQGKIPS (64 aa). The tract at residues 29–60 is basic motif; sequence KLERSRQSARECRARKKLRYQYLEELVSSRER. The interval 62-69 is leucine-zipper; it reads ICALREEL.

This sequence belongs to the bZIP family. ATF subfamily.

It localises to the nucleus. In terms of biological role, probable regulator of creb1 transcriptional activity which is involved in adipose cells differentiation. May also play a regulatory role in the cell cycle. This Xenopus tropicalis (Western clawed frog) protein is cAMP-responsive element-binding protein-like 2 (crebl2).